Consider the following 1872-residue polypeptide: MVKLANPLYTEWILEAVQKIKKQKQRPSEERICHAVSTSHGLDKKTVSEQLELSVQDGSVLKVTNKGLASYKDPDNPGRFSSVKPGTFPKPTKGSKGPPCNDLRNVDWNKLLKRAIEGLEEPNGSSLKNIEKYLRSQSDLTGTTNHPAFQQRLRLGAKRAVNNGRLLKEGPQYRVNSGSSDGKGAPQYPSAFPSSLPPVSLLPHEKDQPRADPIPICSFCLGTKESNREKKPEELLSCADCGSSGHPSCLKFCPELTANVKALRWQCIECKTCSACRVQGKNADNMLFCDSCDRGFHMECCDPPLSRMPKGMWICQVCRPKKKGRKLLHEKAAQIKRRYAKPIGRPKNKLKQRLLSVTSDEGSMSAFTGRGSPGRGQKTKVSTTPSSGHAASGKHSSSRLAVTDPTRPGATTKTTTSSTYISASTLKVNKKTKGLIDGLTKFFTPSPDGRRSRGEIIDFSKHYRPRKKVSQKQSCTSHVLATDTDIKISIKQESADVSLVGNKELVTEEDLDVFKQAQELSWEKIECESGVEDCGRYPSVIEFGKYEIQTWYSSPYPQEYARLPKLYLCEFCLKYMKSKNILLRHSKKCGWFHPPANEIYRRKDLSVFEVDGNMSKIYCQNLCLLAKLFLDHKTLYYDVEPFLFYVLTKNDEKGCHLVGYFSKEKLCQQKYNVSCIMIMPQHQRQGFGRFLIDFSYLLSRREGQAGSPEKPLSDLGRLSYLAYWKSVILEYLYRHHERHISIKAISRATGMCPHDIATTLQHLHMIDRRDGRFVIIRREKLILGHMEKLKNCSRPNELDPESLRWTPMLISNAVVSEEEREAEKEAERLMEQASCWEKEEQEILSSRVSSRQSSAKVQSKNKYLHSPERRPVAGERGQLLELSKESSEEEEEEEEEDDEEEEEEEEEESIQTSPPRLTKPQSVSIKRKRPFVVKKKRGRKRRRINSSVTTETISETTEVLNEPFDNSDEERPMPQLEPTCEIPVEEGGRKPVLRKAFPHQPGKKRQTEEEEGEDNHFFKTAALCRKDVDDDAEHLKEGSKDNPEPLKCRQVWPKGAKRGLSKWKQSKERKTGFKLNLYTPPETPMEPEDQVTIEEQKELSEDKGSPVGMEREVTETVDALLPQEGSRREETGIPVSPHKSPGGKVDEEDLIRGEEEGEEEGEEEGEREEQEEEEEVTTEKDLDGAKSKENPEPEISMEKEDPVHLGDHEEDEDEEEEPSHNEDHDADDEDDGHMEAANMERGDLPRETFKDALEGQEAFLDLSIQPSHSNPEVLMNCGVDLTMSCNSEPKELAGDTGTAPESDAEPPEEQTQKQDQKNSDGVDAELEEGGPAAVEIDSETAQAVQSLTQENREHDDTFPDCAETQEACRSLQNYTHTDQSPQIATTLDECQQSDHSSPVSSVHSHPGQSVRSVNSPSVPALENSYAQISPDQTAITVPPLQNMETSPMMDVPSVSDHSQQVVDSGFSDLGSIESTTENYENPSSYDSTMGGSICGNGSSQNSCSYSSLTSSNLTQNSCAVTQQMSNISGSCSMLQQTSISSPPTCSVKSPQGCVVERPPSSSQQLAQCSMAANFTPPMQLADIPETSNANIGLYERMGQSDFGAGHYPQPSATFSLAKLQQLTNTLIDHSLPYSHSAAVTSYANSASLSTPLSNTGLVQLSQSPHSVPGGPQAQATMTPPPNLTPPPMNLPPPLLQRNMAASNIGISHSQRLQTQIASKGHVSMRTKAASLSPAAATHQSQIYGRSQTVAMQGPARTLTMQRGMNMSVNLMPAPAYNVNSVNMNMNTLNAMNGYSMSQPMMNSGYHSNHGYMNQTPQYPMQMQMGMMGSQPYAQQPMQTPPHANMMYTAPGHHGYMNTGMSKQSLNGSYMRR.

One can recognise an SAMD1-like winged helix (WH) domain in the interval Met1–Pro77. Disordered stretches follow at residues Ser70 to Leu103 and Lys168 to Asp207. The H15 domain maps to Arg104 to Ser177. Residues Pro189 to Leu202 show a composition bias toward low complexity. 2 PHD-type zinc fingers span residues Ile214 to Cys273 and Cys270 to Lys321. Ser356 is modified (phosphoserine). Positions Glu361–Ser417 are disordered. Residues Gly362–Gly535 are negatively regulates HAT activity. The segment covering Ser386–His395 has biased composition (low complexity). Lys491 is covalently cross-linked (Glycyl lysine isopeptide (Lys-Gly) (interchain with G-Cter in SUMO2)). An MYST-type HAT domain is found at Asp533–Pro807. The segment at Arg536–Ala826 is catalytic. The segment at Leu566–Trp591 adopts a C2HC MYST-type zinc-finger fold. An interaction with BRPF1 region spans residues Glu570–Ala826. An N6-acetyllysine; by autocatalysis modification is found at Lys633. Acetyl-CoA is bound by residues Ser674–Ile678 and Gln683–Arg689. Catalysis depends on Glu709, which acts as the Proton donor/acceptor. Ser713 is a binding site for acetyl-CoA. The span at Ser846–Lys860 shows a compositional bias: low complexity. Disordered regions lie at residues Ser846–Phe1018, Asp1031–Ala1252, Met1283–Phe1358, and Asp1388–Val1418. N6-acetyllysine is present on residues Lys856, Lys860, and Lys862. Ser866 bears the Phosphoserine mark. The span at Ser887–Ser909 shows a compositional bias: acidic residues. Positions Ile910 to Ser924 are enriched in polar residues. The segment covering Ile925 to Ile944 has biased composition (basic residues). The span at Ser946–Val959 shows a compositional bias: low complexity. The segment covering Pro991–Lys1004 has biased composition (basic residues). 2 stretches are compositionally biased toward basic and acidic residues: residues Asp1031–Lys1047 and Glu1094–Thr1114. Over residues Glu1155–Val1176 the composition is skewed to acidic residues. Residues Thr1177–Asp1207 are compositionally biased toward basic and acidic residues. The span at His1208–Glu1217 shows a compositional bias: acidic residues. Basic and acidic residues-rich tracts occupy residues Asn1238–Ala1252 and Gln1310–Asp1320. Residues Glu1339–Gln1349 are compositionally biased toward polar residues. The interval Pro1359–Arg1872 is interaction with RUNX1 and RUNX2. Low complexity predominate over residues Ser1393 to Val1410.

The protein belongs to the MYST (SAS/MOZ) family. As to quaternary structure, component of the MOZ/MORF complex composed at least of ING5, KAT6A, KAT6B, MEAF6 and one of BRPF1, BRD1/BRPF2 and BRPF3. Interacts with RUNX1 and RUNX2. Post-translationally, autoacetylation at Lys-633 is required for proper function. As to expression, ubiquitously expressed.

It is found in the nucleus. The enzyme catalyses L-lysyl-[protein] + acetyl-CoA = N(6)-acetyl-L-lysyl-[protein] + CoA + H(+). In terms of biological role, histone acetyltransferase which may be involved in both positive and negative regulation of transcription. Required for RUNX2-dependent transcriptional activation. Component of the MOZ/MORF complex which has a histone H3 acetyltransferase activity. Involved in cerebral cortex development. The chain is Histone acetyltransferase KAT6B (Kat6b) from Mus musculus (Mouse).